The chain runs to 410 residues: Solute carrier family 52, riboflavin transporter, member 3 (410 aa).

3 helical membrane passes run 3–23, 40–60, and 73–93; these read ILIYALACAFGLGSWLAINGL, LPSYLTVIIQLANLGPLLVTL, and VVIYTILCIGVLACFLLAFFL. A glycan (N-linked (GlcNAc...) asparagine) is linked at asparagine 157. Helical transmembrane passes span 158–178, 239–259, 277–297, 301–321, 334–354, and 369–389; these read FTTEVFFFFLAVMMCISLAAF, FQLTFIYLMVVWVNGTTNGLL, LSAALASVANPVACIVAMFFP, LVFLGLLCVMGTGFASYNMAM, ALGEAIIVLSWVFFTGSLSYV, and ALVWCGAAAQIGSLIGSVIMF.

Belongs to the riboflavin transporter family.

Its subcellular location is the cell membrane. The enzyme catalyses riboflavin(in) = riboflavin(out). Its function is as follows. Plasma membrane transporter mediating the uptake by cells of the water soluble vitamin B2/riboflavin that plays a key role in biochemical oxidation-reduction reactions of the carbohydrate, lipid, and amino acid metabolism. This Osmerus mordax (Rainbow smelt) protein is Solute carrier family 52, riboflavin transporter, member 3 (slc52a3).